The following is a 169-amino-acid chain: Ureidoglycolate lyase (169 aa).

Belongs to the ureidoglycolate lyase family. Homodimer. Ni(2+) serves as cofactor.

It carries out the reaction (S)-ureidoglycolate = urea + glyoxylate. The protein operates within nitrogen metabolism; (S)-allantoin degradation. Catalyzes the catabolism of the allantoin degradation intermediate (S)-ureidoglycolate, generating urea and glyoxylate. Involved in the utilization of allantoin as nitrogen source. The polypeptide is Ureidoglycolate lyase (Brucella ovis (strain ATCC 25840 / 63/290 / NCTC 10512)).